The primary structure comprises 360 residues: Glutamate 5-kinase (360 aa).

K7 is a binding site for ATP. Residues S47, D134, and N146 each coordinate substrate. Residues 166 to 167 (TD) and 210 to 216 (TGGISTK) each bind ATP. A PUA domain is found at 275 to 356 (VGKITLDDGA…SSIIVVHRDV (82 aa)).

It belongs to the glutamate 5-kinase family.

Its subcellular location is the cytoplasm. It catalyses the reaction L-glutamate + ATP = L-glutamyl 5-phosphate + ADP. Its pathway is amino-acid biosynthesis; L-proline biosynthesis; L-glutamate 5-semialdehyde from L-glutamate: step 1/2. Functionally, catalyzes the transfer of a phosphate group to glutamate to form L-glutamate 5-phosphate. This is Glutamate 5-kinase from Prochlorococcus marinus (strain MIT 9301).